The primary structure comprises 334 residues: Holliday junction branch migration complex subunit RuvB (334 aa).

The interval 1 to 181 is large ATPase domain (RuvB-L); sequence MTRILDNDLM…FGITGHMEYY (181 aa). ATP is bound by residues L20, R21, G62, K65, T66, T67, 128–130, R171, Y181, and R218; that span reads EDF. A Mg(2+)-binding site is contributed by T66. The tract at residues 182–252 is small ATPAse domain (RuvB-S); sequence QVDDLTEIVE…MTDKALEMLD (71 aa). Residues 255–334 are head domain (RuvB-H); it reads HEGLDYVDQK…LKYPLDTKTE (80 aa). R291, R310, R312, and R315 together coordinate DNA.

Belongs to the RuvB family. Homohexamer. Forms an RuvA(8)-RuvB(12)-Holliday junction (HJ) complex. HJ DNA is sandwiched between 2 RuvA tetramers; dsDNA enters through RuvA and exits via RuvB. An RuvB hexamer assembles on each DNA strand where it exits the tetramer. Each RuvB hexamer is contacted by two RuvA subunits (via domain III) on 2 adjacent RuvB subunits; this complex drives branch migration. In the full resolvosome a probable DNA-RuvA(4)-RuvB(12)-RuvC(2) complex forms which resolves the HJ.

The protein resides in the cytoplasm. The enzyme catalyses ATP + H2O = ADP + phosphate + H(+). In terms of biological role, the RuvA-RuvB-RuvC complex processes Holliday junction (HJ) DNA during genetic recombination and DNA repair, while the RuvA-RuvB complex plays an important role in the rescue of blocked DNA replication forks via replication fork reversal (RFR). RuvA specifically binds to HJ cruciform DNA, conferring on it an open structure. The RuvB hexamer acts as an ATP-dependent pump, pulling dsDNA into and through the RuvAB complex. RuvB forms 2 homohexamers on either side of HJ DNA bound by 1 or 2 RuvA tetramers; 4 subunits per hexamer contact DNA at a time. Coordinated motions by a converter formed by DNA-disengaged RuvB subunits stimulates ATP hydrolysis and nucleotide exchange. Immobilization of the converter enables RuvB to convert the ATP-contained energy into a lever motion, pulling 2 nucleotides of DNA out of the RuvA tetramer per ATP hydrolyzed, thus driving DNA branch migration. The RuvB motors rotate together with the DNA substrate, which together with the progressing nucleotide cycle form the mechanistic basis for DNA recombination by continuous HJ branch migration. Branch migration allows RuvC to scan DNA until it finds its consensus sequence, where it cleaves and resolves cruciform DNA. The protein is Holliday junction branch migration complex subunit RuvB of Streptococcus uberis (strain ATCC BAA-854 / 0140J).